A 339-amino-acid polypeptide reads, in one-letter code: Phospho-N-acetylmuramoyl-pentapeptide-transferase (339 aa).

10 helical membrane passes run threonine 4–isoleucine 24, methionine 53–leucine 73, alanine 80–leucine 100, glycine 113–valine 133, leucine 145–valine 165, glycine 176–alanine 196, phenylalanine 202–asparagine 222, valine 228–threonine 248, tryptophan 253–valine 273, and valine 318–tyrosine 338.

The protein belongs to the glycosyltransferase 4 family. MraY subfamily. It depends on Mg(2+) as a cofactor.

It is found in the cell membrane. It carries out the reaction UDP-N-acetyl-alpha-D-muramoyl-L-alanyl-gamma-D-glutamyl-L-lysyl-D-alanyl-D-alanine + di-trans,octa-cis-undecaprenyl phosphate = Mur2Ac(oyl-L-Ala-gamma-D-Glu-L-Lys-D-Ala-D-Ala)-di-trans,octa-cis-undecaprenyl diphosphate + UMP. Its pathway is cell wall biogenesis; peptidoglycan biosynthesis. Its function is as follows. Catalyzes the initial step of the lipid cycle reactions in the biosynthesis of the cell wall peptidoglycan: transfers peptidoglycan precursor phospho-MurNAc-pentapeptide from UDP-MurNAc-pentapeptide onto the lipid carrier undecaprenyl phosphate, yielding undecaprenyl-pyrophosphoryl-MurNAc-pentapeptide, known as lipid I. The protein is Phospho-N-acetylmuramoyl-pentapeptide-transferase of Streptococcus mutans serotype c (strain ATCC 700610 / UA159).